The primary structure comprises 922 residues: GPI inositol-deacylase (922 aa).

At 1–11 (MFLHSVNLWNL) the chain is on the cytoplasmic side. Residues 12-32 (AFYVFMVFLATLGLWDVFFGF) form a helical membrane-spanning segment. Topologically, residues 33-597 (EENKCSMSYM…GQVVRFHGGA (565 aa)) are lumenal. Ser174 is an active-site residue. N-linked (GlcNAc...) asparagine glycans are attached at residues Asn363, Asn402, and Asn558. A helical membrane pass occupies residues 598–618 (LPAYVVSSILLAYGGQLYSLL). Topologically, residues 619-641 (STGYCLEYSTILDKEAKPYKVDP) are cytoplasmic. Residues 642–662 (FVIMIKFLLGYKWFKELWDAV) traverse the membrane as a helical segment. Residues 663 to 668 (LLPELD) are Lumenal-facing. A helical transmembrane segment spans residues 669–689 (AIVLTSQSMCFPLVSLILFLF). The Cytoplasmic portion of the chain corresponds to 690-694 (GTCTA). The chain crosses the membrane as a helical span at residues 695 to 715 (YWSGLLSSTSVQLLSSLWLAL). The Lumenal segment spans residues 716–733 (KRPAELPKDIKVMSPDLP). Residues 734–754 (VLTVVFLIVSWTTCGALAILL) traverse the membrane as a helical segment. Over 755 to 817 (SYLYYVFKVV…DAEDSLRMHS (63 aa)) the chain is Cytoplasmic. Residues 776–798 (NQPVNPKHSRRSEKKSNHHKDSA) are disordered. Residues 782-793 (KHSRRSEKKSNH) show a composition bias toward basic residues. The helical transmembrane segment at 818-838 (TVINLLTWVVLLSMPSLIYWL) threads the bilayer. The Lumenal portion of the chain corresponds to 839 to 894 (KNLRYYFKLSPDPCKPLAFLLIPAIAILGNTHTVSVKSSKLLKTVSQFPLPLAVGV). The chain crosses the membrane as a helical span at residues 895 to 915 (IAFGSSHLYRVPCFVIIPLVF). Over 916–922 (HALCNFM) the chain is Cytoplasmic.

It belongs to the GPI inositol-deacylase family.

It localises to the endoplasmic reticulum membrane. GPI inositol-deacylase that catalyzes the remove of the acyl chain linked to the 2-OH position of inositol ring from the GPI-anchored protein (GPI-AP) in the endoplasmic reticulum. Initiates the post-attachment remodeling phase of GPI-AP biogenesis and participates in endoplasmic reticulum (ER)-to-Golgi transport of GPI-anchored protein. This chain is GPI inositol-deacylase, found in Mus musculus (Mouse).